Reading from the N-terminus, the 1141-residue chain is Putative late blight resistance protein homolog R1B-13 (1141 aa).

Positions 417 to 437 (DSLAFLKNQIQVIQMEFEILQ) form a coiled coil. Residues 516–742 (TVITHTSSQL…LSIVLVADVL (227 aa)) enclose the NB-ARC domain. LRR repeat units lie at residues 826 to 851 (FKFLKVLDLEHQVVIDFIPTELPYLR), 869 to 894 (LWNLETLILKGTSAKTLLLPSTVWDM), 992 to 1016 (APNLKYLKLSGYYLDSQYLSETVDH), 1017 to 1041 (LKHLEVLKLYNVEFGDYREWEVSNG), and 1043 to 1068 (FPQLKILKLENLSLMKWIVADDAFPI).

It belongs to the disease resistance NB-LRR family.

Its subcellular location is the cytoplasm. The protein localises to the membrane. Confers resistance to late blight (Phytophthora infestans) races carrying the avirulence gene Avr1. Resistance proteins guard the plant against pathogens that contain an appropriate avirulence protein via an indirect interaction with this avirulence protein. That triggers a defense system including the hypersensitive response, which restricts the pathogen growth. The polypeptide is Putative late blight resistance protein homolog R1B-13 (R1B-13) (Solanum demissum (Wild potato)).